Consider the following 1407-residue polypeptide: DNA-directed RNA polymerase subunit beta' (1407 aa).

Zn(2+) contacts are provided by Cys70, Cys72, Cys85, and Cys88. Mg(2+) is bound by residues Asp460, Asp462, and Asp464. Residues Cys814, Cys888, Cys895, and Cys898 each contribute to the Zn(2+) site.

The protein belongs to the RNA polymerase beta' chain family. The RNAP catalytic core consists of 2 alpha, 1 beta, 1 beta' and 1 omega subunit. When a sigma factor is associated with the core the holoenzyme is formed, which can initiate transcription. Mg(2+) is required as a cofactor. The cofactor is Zn(2+).

The catalysed reaction is RNA(n) + a ribonucleoside 5'-triphosphate = RNA(n+1) + diphosphate. DNA-dependent RNA polymerase catalyzes the transcription of DNA into RNA using the four ribonucleoside triphosphates as substrates. The chain is DNA-directed RNA polymerase subunit beta' from Buchnera aphidicola subsp. Acyrthosiphon pisum (strain APS) (Acyrthosiphon pisum symbiotic bacterium).